A 215-amino-acid polypeptide reads, in one-letter code: Myelin protein zero-like protein 2 (215 aa).

A signal peptide spans 1-26 (MYGKSSTRAVLLLLGIQLTALWPIAA). Residues 27 to 141 (VEIYTSRVLE…DGVIGEIRLS (115 aa)) form the Ig-like V-type domain. At 27–154 (VEIYTSRVLE…TVRFSEIHFL (128 aa)) the chain is on the extracellular side. N-linked (GlcNAc...) asparagine glycans are attached at residues N39 and N118. A disulfide bond links C47 and C123. Residues 155 to 175 (ALAIGSACALMIIIVIVVVLF) traverse the membrane as a helical segment. The Cytoplasmic portion of the chain corresponds to 176–215 (QHYRKKRWAERAHKVVEIKSKEEERLNQEKKVSVYLEDTD).

This sequence belongs to the myelin P0 protein family. As to expression, widely expressed. In fetal tissues, highest expression in the inner ear. In adult tissues, highest levels in thymus and lung.

The protein localises to the membrane. Its function is as follows. Mediates homophilic cell-cell adhesion. This Homo sapiens (Human) protein is Myelin protein zero-like protein 2 (MPZL2).